A 301-amino-acid chain; its full sequence is Isonocardicin synthase (301 aa).

As to quaternary structure, monomer.

It carries out the reaction nocardicin G + S-adenosyl-L-methionine = isonocardicin C + S-methyl-5'-thioadenosine + H(+). The enzyme catalyses nocardicin E + S-adenosyl-L-methionine = isonocardicin A + S-methyl-5'-thioadenosine + H(+). The protein operates within antibiotic biosynthesis. In terms of biological role, involved in the biosynthesis of the beta-lactam antibiotic nocardicin A. In the presence of S-adenosyl-L-methionine (AdoMet), catalyzes the transfer of a 3-amino-3-carboxypropyl group from AdoMet to nocardicin G, forming isonocardicin C. Can also catalyze the transformation of nocardicin E and F to isonocardicin A and B, respectively, but in vivo substrate is probably nocardicin G. The protein is Isonocardicin synthase of Nocardia uniformis subsp. tsuyamanensis.